Consider the following 215-residue polypeptide: UPF0502 protein YceH (215 aa).

Lysine 80 is subject to N6-acetyllysine.

This sequence belongs to the UPF0502 family.

This chain is UPF0502 protein YceH, found in Shigella flexneri serotype 5b (strain 8401).